Here is a 378-residue protein sequence, read N- to C-terminus: Putative glycosyltransferase ORF378 (378 aa).

It belongs to the glycosyltransferase group 1 family. Glycosyltransferase 4 subfamily.

In Acidianus sp. F28 (AFV-2), this protein is Putative glycosyltransferase ORF378.